Here is a 635-residue protein sequence, read N- to C-terminus: Two-component response regulator ARR18 (635 aa).

Residues 19–133 (RVLAVDDNPT…ELQNIWHHVV (115 aa)) enclose the Response regulatory domain. A 4-aspartylphosphate modification is found at D70. Disordered regions lie at residues 144-196 (LPPS…KKPR) and 323-342 (IQQG…GTYH). A compositionally biased stretch (acidic residues) spans 166 to 186 (SGDEDDSDREEDDGEGSEQDG). Residues 193–196 (KKPR) carry the Nuclear localization signal motif. The myb-like GARP DNA-binding region spans 196–246 (RVVWSQELHQKFVSAVQQLGLDKAVPKKILDLMSIEGLTRENVASHLQKYR).

It belongs to the ARR family. Type-B subfamily. As to quaternary structure, binds the target DNA as a monomer. Post-translationally, two-component system major event consists of a His-to-Asp phosphorelay between a sensor histidine kinase (HK) and a response regulator (RR). In plants, the His-to-Asp phosphorelay involves an additional intermediate named Histidine-containing phosphotransfer protein (HPt). This multistep phosphorelay consists of a His-Asp-His-Asp sequential transfer of a phosphate group between first a His and an Asp of the HK protein, followed by the transfer to a conserved His of the HPt protein and finally the transfer to an Asp in the receiver domain of the RR protein. In terms of tissue distribution, predominantly expressed in young leaf tissue developing anthers, and siliques.

Its subcellular location is the nucleus. Transcriptional activator that binds specifically to the DNA sequence 5'-[AG]GATT-3'. Functions as a response regulator involved in His-to-Asp phosphorelay signal transduction system. Phosphorylation of the Asp residue in the receiver domain activates the ability of the protein to promote the transcription of target genes. Could directly activate some type-A response regulators in response to cytokinins. The protein is Two-component response regulator ARR18 (ARR18) of Arabidopsis thaliana (Mouse-ear cress).